Reading from the N-terminus, the 245-residue chain is ATP synthase subunit a (245 aa).

7 helical membrane passes run leucine 5–valine 25, isoleucine 37–alanine 57, tyrosine 99–phenylalanine 119, phenylalanine 125–leucine 145, phenylalanine 157–phenylalanine 177, leucine 187–phenylalanine 209, and serine 221–alanine 241.

It belongs to the ATPase A chain family. In terms of assembly, F-type ATPases have 2 components, CF(1) - the catalytic core - and CF(0) - the membrane proton channel. CF(1) has five subunits: alpha(3), beta(3), gamma(1), delta(1), epsilon(1). CF(0) has three main subunits: a(1), b(2) and c(9-12). The alpha and beta chains form an alternating ring which encloses part of the gamma chain. CF(1) is attached to CF(0) by a central stalk formed by the gamma and epsilon chains, while a peripheral stalk is formed by the delta and b chains.

The protein resides in the cell inner membrane. In terms of biological role, key component of the proton channel; it plays a direct role in the translocation of protons across the membrane. The protein is ATP synthase subunit a of Koribacter versatilis (strain Ellin345).